The following is a 132-amino-acid chain: Small ribosomal subunit protein uS8 (132 aa).

Belongs to the universal ribosomal protein uS8 family. Part of the 30S ribosomal subunit. Contacts proteins S5 and S12.

One of the primary rRNA binding proteins, it binds directly to 16S rRNA central domain where it helps coordinate assembly of the platform of the 30S subunit. In Rickettsia conorii (strain ATCC VR-613 / Malish 7), this protein is Small ribosomal subunit protein uS8.